Reading from the N-terminus, the 513-residue chain is MINLKIGQKLQLEIERMGINGEGIGVISGRLVFIPYALPGEEVLVEITENARNFSRAKLVKIIEKSPNRVKPQDRAYHEMSQSHIMHLSYPMQLEFKRDVMRQALEKYKPAGWRNYELRATLGMENTLGYRNKLQFQVRRLNDGTVIAGLYQEGTHHLVNLDNCLVQDPKTQEIINHICRLIEKFDLPVYDERKIGGIRTVMVRRSQKTGEVQIIFVTSTPIILDGQVWPELREEPSKRQKNSFVKFDKMLSALTEEFEEIVTVAVNFHPRKTSEIYGERTQILFNEKETITEGVLDYEFELSPRAFYQLNSEQANVLYGEAVKALNPKKDDRVIDAYCGVGTIGFAVAKKVKSVHGMDITPESIFDARENAKRLGLKNCHYEIGKAERIIPNWNKSGHRATAMIVDPPRTGLDDALLETITKFPPEKMVYVSCNVSTLAKDLVVLANFYKVEYIQSVDMFPHTARTEAVVKLTKRDEPLKIVKFEHLEEERKAEAFAKGKKRGRRPQKYGKY.

Residues 3-61 (NLKIGQKLQLEIERMGINGEGIGVISGRLVFIPYALPGEEVLVEITENARNFSRAKLVK) form the TRAM domain. S-adenosyl-L-methionine contacts are provided by Q309, Y338, D359, and D407. C434 functions as the Nucleophile in the catalytic mechanism.

It belongs to the class I-like SAM-binding methyltransferase superfamily. RNA M5U methyltransferase family.

This is an uncharacterized protein from Lactococcus lactis subsp. lactis (strain IL1403) (Streptococcus lactis).